Here is a 104-residue protein sequence, read N- to C-terminus: Putative zinc finger protein ORF104b (104 aa).

The C2H2-type zinc-finger motif lies at 62-85 (YECKYCHTRYLSHTGIVYHLEREH).

This is Putative zinc finger protein ORF104b from Acidianus sp. F28 (AFV-2).